The following is a 695-amino-acid chain: Segment polarity protein dishevelled homolog DVL-1 (695 aa).

One can recognise a DIX domain in the interval M1 to E85. The segment at S89–S236 is disordered. Basic residues predominate over residues S142 to R151. Positions N152 to L171 are enriched in basic and acidic residues. The segment covering S177–I192 has biased composition (low complexity). S194 bears the Phosphoserine mark. Positions S201–R214 are enriched in low complexity. The segment covering L215–L228 has biased composition (basic residues). Positions T251–E323 constitute a PDZ domain. In terms of domain architecture, DEP spans P425–D499. Over residues P551–R580 the composition is skewed to low complexity. Positions P551–L641 are disordered. Positions S622 to S635 are enriched in polar residues.

The protein belongs to the DSH family. Interacts with BRD7 and INVS. Interacts (via PDZ domain) with the VANGL1 and VANGL2 (via C-terminus). Interacts (via PDZ domain) with NXN. Interacts with CXXC4. Interacts with ARRB1; the interaction is enhanced by phosphorylation of DVL1. Interacts with CYLD. Interacts (via PDZ domain) with RYK. Self-associates (via DIX domain) and forms higher homooligomers. Interacts (via PDZ domain) with DACT1 and FZD7, where DACT1 and FZD7 compete for the same binding site. Interacts (via DEP domain) with MUSK; the interaction is direct and mediates the formation a DVL1, MUSK and PAK1 ternary complex involved in AChR clustering. Interacts (via PDZ domain) with TMEM88. Interacts with DCDC2. Interacts with FOXK2. Interacts with PKD1 (via extracellular domain). Interacts (via PDZ domain) with CCDC88C/DAPLE; competes with CCDC88C for binding to frizzled receptor FZD7 and dissociates from CCDC88C following initiation of non-canonical Wnt signaling when CCDC88C displaces DVL1 from ligand-activated FZD7. Ubiquitinated; undergoes both 'Lys-48'-linked ubiquitination, leading to its subsequent degradation by the ubiquitin-proteasome pathway, and 'Lys-63'-linked ubiquitination. The interaction with INVS is required for ubiquitination. Deubiquitinated by CYLD, which acts on 'Lys-63'-linked ubiquitin chains.

It is found in the cell membrane. The protein resides in the cytoplasm. The protein localises to the cytosol. Its subcellular location is the cytoplasmic vesicle. In terms of biological role, participates in Wnt signaling by binding to the cytoplasmic C-terminus of frizzled family members and transducing the Wnt signal to down-stream effectors. Plays a role both in canonical and non-canonical Wnt signaling. Plays a role in the signal transduction pathways mediated by multiple Wnt genes. Required for LEF1 activation upon WNT1 and WNT3A signaling. DVL1 and PAK1 form a ternary complex with MUSK which is important for MUSK-dependent regulation of AChR clustering during the formation of the neuromuscular junction (NMJ). The sequence is that of Segment polarity protein dishevelled homolog DVL-1 (Dvl1) from Rattus norvegicus (Rat).